The following is a 293-amino-acid chain: 4-hydroxy-tetrahydrodipicolinate synthase (293 aa).

T45 is a binding site for pyruvate. Y133 serves as the catalytic Proton donor/acceptor. The active-site Schiff-base intermediate with substrate is K161. I203 serves as a coordination point for pyruvate.

The protein belongs to the DapA family. Homotetramer; dimer of dimers.

The protein resides in the cytoplasm. The catalysed reaction is L-aspartate 4-semialdehyde + pyruvate = (2S,4S)-4-hydroxy-2,3,4,5-tetrahydrodipicolinate + H2O + H(+). It functions in the pathway amino-acid biosynthesis; L-lysine biosynthesis via DAP pathway; (S)-tetrahydrodipicolinate from L-aspartate: step 3/4. In terms of biological role, catalyzes the condensation of (S)-aspartate-beta-semialdehyde [(S)-ASA] and pyruvate to 4-hydroxy-tetrahydrodipicolinate (HTPA). In Shewanella denitrificans (strain OS217 / ATCC BAA-1090 / DSM 15013), this protein is 4-hydroxy-tetrahydrodipicolinate synthase.